The sequence spans 219 residues: UPF0376 protein C36C5.12 (219 aa).

Residues 1-20 are Cytoplasmic-facing; it reads MGRLDVKNSWIEFHQDEMTS. A helical; Signal-anchor for type II membrane protein transmembrane segment spans residues 21-43; that stretch reads FLKLAIIGTVLLGVAHGANLTAA. The Extracellular segment spans residues 44–219; that stretch reads EKETYCELRS…VSKCDFSRLG (176 aa). Asn-104 and Asn-204 each carry an N-linked (GlcNAc...) asparagine glycan.

The protein belongs to the UPF0376 family.

The protein localises to the membrane. The sequence is that of UPF0376 protein C36C5.12 from Caenorhabditis elegans.